A 545-amino-acid chain; its full sequence is Chaperonin GroEL (545 aa).

ATP contacts are provided by residues 29–32 (TLGP), Lys50, 86–90 (DGTTT), Gly415, and Asp495.

The protein belongs to the chaperonin (HSP60) family. In terms of assembly, forms a cylinder of 14 subunits composed of two heptameric rings stacked back-to-back. Interacts with the co-chaperonin GroES.

It localises to the cytoplasm. The catalysed reaction is ATP + H2O + a folded polypeptide = ADP + phosphate + an unfolded polypeptide.. Together with its co-chaperonin GroES, plays an essential role in assisting protein folding. The GroEL-GroES system forms a nano-cage that allows encapsulation of the non-native substrate proteins and provides a physical environment optimized to promote and accelerate protein folding. The sequence is that of Chaperonin GroEL from Porphyromonas gingivalis (strain ATCC BAA-308 / W83).